The following is a 317-amino-acid chain: 2,3-dihydroxyphenylpropionate/2,3-dihydroxicinnamic acid 1,2-dioxygenase (317 aa).

His115 serves as the catalytic Proton donor. The Proton acceptor role is filled by His179.

It belongs to the LigB/MhpB extradiol dioxygenase family. As to quaternary structure, homotetramer. Requires Fe(2+) as cofactor.

It catalyses the reaction 3-(2,3-dihydroxyphenyl)propanoate + O2 = (2Z,4E)-2-hydroxy-6-oxonona-2,4-dienedioate + H(+). The catalysed reaction is (2E)-3-(2,3-dihydroxyphenyl)prop-2-enoate + O2 = (2Z,4E,7E)-2-hydroxy-6-oxonona-2,4,7-trienedioate + H(+). It participates in aromatic compound metabolism; 3-phenylpropanoate degradation. Catalyzes the non-heme iron(II)-dependent oxidative cleavage of 2,3-dihydroxyphenylpropionic acid and 2,3-dihydroxicinnamic acid into 2-hydroxy-6-ketononadienedioate and 2-hydroxy-6-ketononatrienedioate, respectively. This Burkholderia vietnamiensis (strain G4 / LMG 22486) (Burkholderia cepacia (strain R1808)) protein is 2,3-dihydroxyphenylpropionate/2,3-dihydroxicinnamic acid 1,2-dioxygenase.